The following is a 721-amino-acid chain: Ribosomal RNA large subunit methyltransferase K/L (721 aa).

In terms of domain architecture, THUMP spans 56–167; sequence GMYKACLWSR…REVVTVSIDL (112 aa).

Belongs to the methyltransferase superfamily. RlmKL family.

Its subcellular location is the cytoplasm. The catalysed reaction is guanosine(2445) in 23S rRNA + S-adenosyl-L-methionine = N(2)-methylguanosine(2445) in 23S rRNA + S-adenosyl-L-homocysteine + H(+). It catalyses the reaction guanosine(2069) in 23S rRNA + S-adenosyl-L-methionine = N(2)-methylguanosine(2069) in 23S rRNA + S-adenosyl-L-homocysteine + H(+). In terms of biological role, specifically methylates the guanine in position 2445 (m2G2445) and the guanine in position 2069 (m7G2069) of 23S rRNA. This Marinomonas sp. (strain MWYL1) protein is Ribosomal RNA large subunit methyltransferase K/L.